Here is a 440-residue protein sequence, read N- to C-terminus: tRNA-2-methylthio-N(6)-dimethylallyladenosine synthase (440 aa).

Residues Lys-5–Lys-121 form the MTTase N-terminal domain. [4Fe-4S] cluster is bound by residues Cys-14, Cys-50, Cys-84, Cys-159, Cys-163, and Cys-166. The 231-residue stretch at Arg-145–Glu-375 folds into the Radical SAM core domain. The 63-residue stretch at Lys-378–Arg-440 folds into the TRAM domain.

The protein belongs to the methylthiotransferase family. MiaB subfamily. In terms of assembly, monomer. [4Fe-4S] cluster serves as cofactor.

Its subcellular location is the cytoplasm. The catalysed reaction is N(6)-dimethylallyladenosine(37) in tRNA + (sulfur carrier)-SH + AH2 + 2 S-adenosyl-L-methionine = 2-methylsulfanyl-N(6)-dimethylallyladenosine(37) in tRNA + (sulfur carrier)-H + 5'-deoxyadenosine + L-methionine + A + S-adenosyl-L-homocysteine + 2 H(+). Its function is as follows. Catalyzes the methylthiolation of N6-(dimethylallyl)adenosine (i(6)A), leading to the formation of 2-methylthio-N6-(dimethylallyl)adenosine (ms(2)i(6)A) at position 37 in tRNAs that read codons beginning with uridine. This chain is tRNA-2-methylthio-N(6)-dimethylallyladenosine synthase, found in Geotalea uraniireducens (strain Rf4) (Geobacter uraniireducens).